We begin with the raw amino-acid sequence, 417 residues long: Serine hydroxymethyltransferase (417 aa).

K54 carries the post-translational modification N6-acetyllysine. Residues L121 and 125–127 (GHL) contribute to the (6S)-5,6,7,8-tetrahydrofolate site. The residue at position 229 (K229) is an N6-(pyridoxal phosphate)lysine. N6-acetyllysine occurs at positions 250, 285, and 354. Residue 355–357 (SPF) coordinates (6S)-5,6,7,8-tetrahydrofolate. K375 bears the N6-acetyllysine mark.

It belongs to the SHMT family. Homodimer. It depends on pyridoxal 5'-phosphate as a cofactor.

The protein localises to the cytoplasm. It catalyses the reaction (6R)-5,10-methylene-5,6,7,8-tetrahydrofolate + glycine + H2O = (6S)-5,6,7,8-tetrahydrofolate + L-serine. It participates in one-carbon metabolism; tetrahydrofolate interconversion. It functions in the pathway amino-acid biosynthesis; glycine biosynthesis; glycine from L-serine: step 1/1. Catalyzes the reversible interconversion of serine and glycine with tetrahydrofolate (THF) serving as the one-carbon carrier. This reaction serves as the major source of one-carbon groups required for the biosynthesis of purines, thymidylate, methionine, and other important biomolecules. Also exhibits THF-independent aldolase activity toward beta-hydroxyamino acids, producing glycine and aldehydes, via a retro-aldol mechanism. This chain is Serine hydroxymethyltransferase, found in Escherichia coli O17:K52:H18 (strain UMN026 / ExPEC).